A 311-amino-acid chain; its full sequence is HPr kinase/phosphorylase (311 aa).

Catalysis depends on residues H139 and K160. 154–161 (GDSGVGKS) provides a ligand contact to ATP. Mg(2+) is bound at residue S161. D178 serves as the catalytic Proton acceptor; for phosphorylation activity. Proton donor; for dephosphorylation activity. The interval 202–211 (LEIRGIGIID) is important for the catalytic mechanism of both phosphorylation and dephosphorylation. E203 provides a ligand contact to Mg(2+). The active site involves R244. The interval 265–270 (PVKTGR) is important for the catalytic mechanism of dephosphorylation.

It belongs to the HPrK/P family. As to quaternary structure, homohexamer. Requires Mg(2+) as cofactor.

It carries out the reaction [HPr protein]-L-serine + ATP = [HPr protein]-O-phospho-L-serine + ADP + H(+). It catalyses the reaction [HPr protein]-O-phospho-L-serine + phosphate + H(+) = [HPr protein]-L-serine + diphosphate. Functionally, catalyzes the ATP- as well as the pyrophosphate-dependent phosphorylation of a specific serine residue in HPr, a phosphocarrier protein of the phosphoenolpyruvate-dependent sugar phosphotransferase system (PTS). HprK/P also catalyzes the pyrophosphate-producing, inorganic phosphate-dependent dephosphorylation (phosphorolysis) of seryl-phosphorylated HPr (P-Ser-HPr). The two antagonistic activities of HprK/P are regulated by several intracellular metabolites, which change their concentration in response to the absence or presence of rapidly metabolisable carbon sources (glucose, fructose, etc.) in the growth medium. Therefore, by controlling the phosphorylation state of HPr, HPrK/P is a sensor enzyme that plays a major role in the regulation of carbon metabolism and sugar transport: it mediates carbon catabolite repression (CCR), and regulates PTS-catalyzed carbohydrate uptake and inducer exclusion. In Levilactobacillus brevis (strain ATCC 367 / BCRC 12310 / CIP 105137 / JCM 1170 / LMG 11437 / NCIMB 947 / NCTC 947) (Lactobacillus brevis), this protein is HPr kinase/phosphorylase.